The primary structure comprises 373 residues: Probable dual-specificity RNA methyltransferase RlmN (373 aa).

Catalysis depends on Glu111, which acts as the Proton acceptor. Residues 117-356 (GPGRLTACLS…LRKSYGTSIH (240 aa)) enclose the Radical SAM core domain. A disulfide bridge connects residues Cys124 and Cys359. 3 residues coordinate [4Fe-4S] cluster: Cys131, Cys135, and Cys138. S-adenosyl-L-methionine-binding positions include 183-184 (GE), Ser216, 239-241 (SLH), and Asn316. Catalysis depends on Cys359, which acts as the S-methylcysteine intermediate.

This sequence belongs to the radical SAM superfamily. RlmN family. It depends on [4Fe-4S] cluster as a cofactor.

It localises to the cytoplasm. The catalysed reaction is adenosine(2503) in 23S rRNA + 2 reduced [2Fe-2S]-[ferredoxin] + 2 S-adenosyl-L-methionine = 2-methyladenosine(2503) in 23S rRNA + 5'-deoxyadenosine + L-methionine + 2 oxidized [2Fe-2S]-[ferredoxin] + S-adenosyl-L-homocysteine. It carries out the reaction adenosine(37) in tRNA + 2 reduced [2Fe-2S]-[ferredoxin] + 2 S-adenosyl-L-methionine = 2-methyladenosine(37) in tRNA + 5'-deoxyadenosine + L-methionine + 2 oxidized [2Fe-2S]-[ferredoxin] + S-adenosyl-L-homocysteine. Functionally, specifically methylates position 2 of adenine 2503 in 23S rRNA and position 2 of adenine 37 in tRNAs. The chain is Probable dual-specificity RNA methyltransferase RlmN from Chlorobium phaeovibrioides (strain DSM 265 / 1930) (Prosthecochloris vibrioformis (strain DSM 265)).